The following is a 562-amino-acid chain: NAD-dependent malic enzyme (562 aa).

Tyr101 serves as the catalytic Proton donor. Arg154 is a binding site for NAD(+). Lys172 serves as the catalytic Proton acceptor. Residues Glu243, Asp244, and Asp267 each coordinate a divalent metal cation. Asp267 and Asn415 together coordinate NAD(+).

It belongs to the malic enzymes family. In terms of assembly, homotetramer. The cofactor is Mg(2+). Requires Mn(2+) as cofactor.

The enzyme catalyses (S)-malate + NAD(+) = pyruvate + CO2 + NADH. The catalysed reaction is oxaloacetate + H(+) = pyruvate + CO2. This Shewanella piezotolerans (strain WP3 / JCM 13877) protein is NAD-dependent malic enzyme.